The following is a 109-amino-acid chain: Oncomodulin-1 (109 aa).

N-acetylserine is present on Ser2. 2 consecutive EF-hand domains span residues 39–74 (MSANQVKDVFRFIDNDQSGYLDEEELKFFLQKFESG) and 78–109 (LTESETKSLMAAADNDGDGKIGAEEFQEMVHS). Ca(2+) is bound by residues Asp52, Asp54, Ser56, Tyr58, Glu63, Asp91, Asp93, Asp95, Lys97, and Glu102.

This sequence belongs to the parvalbumin family.

Has some calmodulin-like activity with respect to enzyme activation and growth regulation. Binds two calcium ions. The chain is Oncomodulin-1 (OCM) from Homo sapiens (Human).